A 154-amino-acid chain; its full sequence is Large-conductance mechanosensitive channel (154 aa).

A run of 2 helical transmembrane segments spans residues 14–34 (VVDL…VNSL) and 86–106 (VFIN…FFVV).

This sequence belongs to the MscL family. Homopentamer.

The protein resides in the cell membrane. Functionally, channel that opens in response to stretch forces in the membrane lipid bilayer. May participate in the regulation of osmotic pressure changes within the cell. The polypeptide is Large-conductance mechanosensitive channel (Dehalococcoides mccartyi (strain CBDB1)).